The following is a 405-amino-acid chain: Sialic acid transporter NanX (405 aa).

The Cytoplasmic segment spans residues 1 to 20 (MATAWYKQVNPPQRKALFSA). A helical membrane pass occupies residues 21–41 (WLGYVFDGFDFMMIFYILHII). The Periplasmic portion of the chain corresponds to 42–53 (KADLGITDIQAT). A helical membrane pass occupies residues 54–74 (LIGTVAFIARPIGGGFFGAMA). At 75–80 (DKYGRK) the chain is on the cytoplasmic side. A helical transmembrane segment spans residues 81–101 (PMMMWAIFIYSVGTGLSGIAT). Position 102 (N102) is a topological domain, periplasmic. The helical transmembrane segment at 103–123 (LYMLAVCRFIVGLGMSGEYAC) threads the bilayer. At 124 to 139 (ASTYAVESWPKNLQSK) the chain is on the cytoplasmic side. Residues 140–160 (ASAFLVSGFSVGNIIAAQIIP) traverse the membrane as a helical segment. Topologically, residues 161 to 164 (QFAE) are periplasmic. Residues 165–185 (VYGWRNSFFIGLLPVLLVLWI) traverse the membrane as a helical segment. Topologically, residues 186-214 (RKSAPESQEWIEDKYKDKSTFLSVFRKPH) are cytoplasmic. A helical transmembrane segment spans residues 215 to 235 (LSISMIVFLVCFCLFGANWPI). The Periplasmic segment spans residues 236 to 250 (NGLLPSYLADNGVNT). A helical membrane pass occupies residues 251 to 271 (VVISTLMTIAGLGTLTGTIFF). Residues 272–282 (GFVGDKIGVKK) are Cytoplasmic-facing. Residues 283–303 (AFVVGLITSFIFLCPLFFISV) traverse the membrane as a helical segment. Residues 304–307 (KNSS) are Periplasmic-facing. Residues 308-328 (LIGLCLFGLMFTNLGIAGLVP) traverse the membrane as a helical segment. The Cytoplasmic portion of the chain corresponds to 329-344 (KFIYDYFPTKLRGLGT). Residues 345-365 (GLIYNLGATGGMAAPVLATYI) traverse the membrane as a helical segment. Topologically, residues 366-371 (SGYYGL) are periplasmic. A helical transmembrane segment spans residues 372 to 392 (GVSLFIVTVAFSALLILLVGF). Residues 393-405 (DIPGKIYKLSVAK) lie on the Cytoplasmic side of the membrane.

This sequence belongs to the major facilitator superfamily. Sugar transporter (TC 2.A.1.1) family.

Its subcellular location is the cell inner membrane. In terms of biological role, probably transports across the inner membrane the two dehydrated forms of N-acetylneuraminate (Neu5Ac), 2,7-anhydro-N-acetylneuraminate (2,7-AN) and 2-deoxy-2,3-didehydro-N-acetylneuraminate (2,3-EN). The polypeptide is Sialic acid transporter NanX (Escherichia coli (strain K12)).